The chain runs to 271 residues: Tryptophan synthase alpha chain (271 aa).

Catalysis depends on proton acceptor residues E49 and D60.

This sequence belongs to the TrpA family. Tetramer of two alpha and two beta chains.

It carries out the reaction (1S,2R)-1-C-(indol-3-yl)glycerol 3-phosphate + L-serine = D-glyceraldehyde 3-phosphate + L-tryptophan + H2O. Its pathway is amino-acid biosynthesis; L-tryptophan biosynthesis; L-tryptophan from chorismate: step 5/5. The alpha subunit is responsible for the aldol cleavage of indoleglycerol phosphate to indole and glyceraldehyde 3-phosphate. The polypeptide is Tryptophan synthase alpha chain (Burkholderia mallei (strain NCTC 10247)).